We begin with the raw amino-acid sequence, 232 residues long: Flagellar L-ring protein (232 aa).

Residues 1–15 form the signal peptide; the sequence is MKKVLFYVLPFAFFG. C16 is lipidated: N-palmitoyl cysteine. A lipid anchor (S-diacylglycerol cysteine) is attached at C16.

Belongs to the FlgH family. In terms of assembly, the basal body constitutes a major portion of the flagellar organelle and consists of four rings (L,P,S, and M) mounted on a central rod.

The protein localises to the cell outer membrane. Its subcellular location is the bacterial flagellum basal body. Functionally, assembles around the rod to form the L-ring and probably protects the motor/basal body from shearing forces during rotation. This Campylobacter jejuni subsp. jejuni serotype O:23/36 (strain 81-176) protein is Flagellar L-ring protein.